Consider the following 216-residue polypeptide: Octanoyltransferase (216 aa).

The region spanning 30-204 (KNNINEIWLL…NCKKFLMMNN (175 aa)) is the BPL/LPL catalytic domain. Residues 68–75 (RGGHMTFH), 135–137 (SIG), and 148–150 (GLA) each bind substrate. Residue cysteine 166 is the Acyl-thioester intermediate of the active site.

Belongs to the LipB family.

The protein localises to the cytoplasm. The enzyme catalyses octanoyl-[ACP] + L-lysyl-[protein] = N(6)-octanoyl-L-lysyl-[protein] + holo-[ACP] + H(+). It participates in protein modification; protein lipoylation via endogenous pathway; protein N(6)-(lipoyl)lysine from octanoyl-[acyl-carrier-protein]: step 1/2. Functionally, catalyzes the transfer of endogenously produced octanoic acid from octanoyl-acyl-carrier-protein onto the lipoyl domains of lipoate-dependent enzymes. Lipoyl-ACP can also act as a substrate although octanoyl-ACP is likely to be the physiological substrate. The sequence is that of Octanoyltransferase from Wigglesworthia glossinidia brevipalpis.